Reading from the N-terminus, the 291-residue chain is m-AAA protease-interacting protein 1, mitochondrial (291 aa).

A mitochondrion-targeting transit peptide spans 1-96 (MALAVRLLPR…TFPSCPRRTY (96 aa)).

As to quaternary structure, interacts with AFG3L2. Interacts with SPG7. Interacts with SMDT1/EMRE (via the N-terminal transit peptide); interaction is direct and takes place before maturation of SMDT1/EMRE.

Its subcellular location is the mitochondrion matrix. In terms of biological role, promotes sorting of SMDT1/EMRE in mitochondria by ensuring its maturation. Interacts with the transit peptide region of SMDT1/EMRE precursor protein in the mitochondrial matrix, leading to protect it against protein degradation by YME1L1, thereby ensuring SMDT1/EMRE maturation by the mitochondrial processing peptidase (PMPCA and PMPCB). This chain is m-AAA protease-interacting protein 1, mitochondrial, found in Bos taurus (Bovine).